Reading from the N-terminus, the 566-residue chain is NAD-dependent malic enzyme 3 (566 aa).

Y105 (proton donor) is an active-site residue. Residue K178 is the Proton acceptor of the active site. Residues E249, D250, and D273 each coordinate a divalent metal cation. NAD(+)-binding positions include A306–A309, N423, and N468.

Belongs to the malic enzymes family. Requires Mg(2+) as cofactor. The cofactor is Mn(2+).

The enzyme catalyses (S)-malate + NAD(+) = pyruvate + CO2 + NADH. It catalyses the reaction oxaloacetate + H(+) = pyruvate + CO2. Catalyzes the decarboxylation of malate to pyruvate. Can use NAD and NADP, but with a strong preference for NAD. Can also catalyze the decarboxylation of oxaloacetate. Involved in keeping the ATP levels high. The polypeptide is NAD-dependent malic enzyme 3 (malS) (Bacillus subtilis (strain 168)).